The primary structure comprises 215 residues: Thymidylate kinase (215 aa).

Residue 7–14 (GMEGSGKS) coordinates ATP.

The protein belongs to the thymidylate kinase family.

The enzyme catalyses dTMP + ATP = dTDP + ADP. In terms of biological role, phosphorylation of dTMP to form dTDP in both de novo and salvage pathways of dTTP synthesis. This Nitratidesulfovibrio vulgaris (strain DSM 19637 / Miyazaki F) (Desulfovibrio vulgaris) protein is Thymidylate kinase.